The chain runs to 299 residues: Biphenyl-2,3-diol 1,2-dioxygenase (299 aa).

VOC domains follow at residues Glu-6–Gly-121 and Gly-146–Gly-267. 3 residues coordinate Fe cation: His-149, His-212, and Glu-263.

It belongs to the extradiol ring-cleavage dioxygenase family. As to quaternary structure, homooctamer. Requires Fe(2+) as cofactor.

It catalyses the reaction biphenyl-2,3-diol + O2 = 2-hydroxy-6-oxo-6-phenylhexa-2,4-dienoate + H(+). Its pathway is xenobiotic degradation; biphenyl degradation; 2-hydroxy-2,4-pentadienoate and benzoate from biphenyl: step 3/4. This Sphingomonas paucimobilis (Pseudomonas paucimobilis) protein is Biphenyl-2,3-diol 1,2-dioxygenase (bphC).